Consider the following 396-residue polypeptide: MLDNHTIAIVKSTIPLLAETGPKLTAHFYDRMFTHNPELKDIFNMSNQRNGDQREALFNAICAYATNIENLAALLPAVERIAQKHTSFNIQADQYQIVGNHLLATLDEMFSPGQEVLDAWGKAYGVLANVFIQREDDIYRSTETKTGGWSGVRPFRIVNKQLQSSVITSFTLEPTDGQPIADFQPGQYLAIYIKHDSFANQEIRQYSLTHAPNGKSYRIAVKREAQGTVSGYLHDTAREGDIVHLAAPHGDFFLDIPTDTPVALISGGVGQTPMLGMLHTLKQQDHQAKVLWLHAAENGTAHAFTDEIEQTGQALPHFDHHIWYREPQQTDRPGEDYHHSGLMQLASLKGELTTPDMHYYLCGPVVFMQFVAQQLLAMGIPAEQLHYECFGPHKVV.

One can recognise a Globin domain in the interval 1–136 (MLDNHTIAIV…LANVFIQRED (136 aa)). Histidine 85 contacts heme b. Catalysis depends on charge relay system residues tyrosine 95 and glutamate 135. Residues 147 to 396 (GGWSGVRPFR…YECFGPHKVV (250 aa)) are reductase. Positions 150-255 (SGVRPFRIVN…AAPHGDFFLD (106 aa)) constitute an FAD-binding FR-type domain. FAD contacts are provided by residues tyrosine 188 and 204-207 (RQYS). 268-273 (GVGQTP) is a binding site for NADP(+). 389–392 (CFGP) lines the FAD pocket.

It belongs to the globin family. Two-domain flavohemoproteins subfamily. The protein in the C-terminal section; belongs to the flavoprotein pyridine nucleotide cytochrome reductase family. The cofactor is heme b. FAD is required as a cofactor.

It carries out the reaction 2 nitric oxide + NADPH + 2 O2 = 2 nitrate + NADP(+) + H(+). The enzyme catalyses 2 nitric oxide + NADH + 2 O2 = 2 nitrate + NAD(+) + H(+). In terms of biological role, is involved in NO detoxification in an aerobic process, termed nitric oxide dioxygenase (NOD) reaction that utilizes O(2) and NAD(P)H to convert NO to nitrate, which protects the bacterium from various noxious nitrogen compounds. Therefore, plays a central role in the inducible response to nitrosative stress. This is Flavohemoprotein from Pectobacterium atrosepticum (strain SCRI 1043 / ATCC BAA-672) (Erwinia carotovora subsp. atroseptica).